The chain runs to 682 residues: Heat shock 70 kDa protein, mitochondrial (682 aa).

The transit peptide at 1–57 directs the protein to the mitochondrion; sequence MATAALLRSLRRREFATSSISAYRTLASNTKPSWCPSLVGAKWAGLARPFSSKPAGN. The tract at residues 649–682 is disordered; the sequence is GEHMAGGSSGGASGGGGAQGGDQPPEAEYEEVKK. Gly residues predominate over residues 655 to 668; sequence GSSGGASGGGGAQG. Acidic residues predominate over residues 673–682; sequence PEAEYEEVKK.

Belongs to the heat shock protein 70 family.

Its subcellular location is the mitochondrion. The polypeptide is Heat shock 70 kDa protein, mitochondrial (HSP68) (Solanum tuberosum (Potato)).